The sequence spans 389 residues: Glutamate 5-kinase (389 aa).

ATP is bound at residue K16. Substrate-binding residues include S56, D143, and N155. 175–176 (SD) is a binding site for ATP. A PUA domain is found at 281 to 358 (AGELHVDEGA…AEIEAILGYA (78 aa)).

It belongs to the glutamate 5-kinase family.

The protein resides in the cytoplasm. It carries out the reaction L-glutamate + ATP = L-glutamyl 5-phosphate + ADP. It participates in amino-acid biosynthesis; L-proline biosynthesis; L-glutamate 5-semialdehyde from L-glutamate: step 1/2. Catalyzes the transfer of a phosphate group to glutamate to form L-glutamate 5-phosphate. In Rhizobium rhizogenes (strain K84 / ATCC BAA-868) (Agrobacterium radiobacter), this protein is Glutamate 5-kinase.